We begin with the raw amino-acid sequence, 382 residues long: Putative NADPH dehydrogenase C5H10.04 (382 aa).

FMN-binding residues include threonine 28 and histidine 189. Substrate-binding residues include histidine 189 and asparagine 192. Residues arginine 242 and arginine 334 each coordinate FMN. Tyrosine 361 is a binding site for substrate.

It belongs to the NADH:flavin oxidoreductase/NADH oxidase family. As to quaternary structure, homodimer or heterodimer. FMN is required as a cofactor.

The enzyme catalyses A + NADPH + H(+) = AH2 + NADP(+). This chain is Putative NADPH dehydrogenase C5H10.04, found in Schizosaccharomyces pombe (strain 972 / ATCC 24843) (Fission yeast).